A 544-amino-acid polypeptide reads, in one-letter code: MSIFKRLLCLTLLWIAALESEADPLIVEITNGKIRGKDNGLYYSYESIPNAEHPTGALRFEAPQPYSHHWTDVFNATQSPVECMQWNQFINENNKLMGDEDCLTVSIYKPKKPNRSSFPVVVLLHGGAFMFGSGSIYGHDSIMREGTLLVVKISFGLGPLGFASTGDRHLPGNYGLKDQRLALQWIKKNIAHFGGMPDNIVLIGHSAGGASAHLQLLHEDFKHLAKGAISVSGNALDPWVIQQGGRRRAFELGRIVGCGHTNVSAELKDCLKSKPASDIVSAVRSFLVFSYVPFSAFGPVVEPSDAPDAFLTEDPRAVIKSGKFAQVPWAVTYTTEDGGYNAAQLLERNKLTGESWIDLLNDRWFDWAPYLLFYRDAKKTIKDMDDLSFDLRQQYLADRRFSVESYWNVQRMFTDVLFKNSVPSAIDLHRKYGKSPVYSFVYDNPTDSGVGQLLSNRTDVHFGTVHGDDFFLIFNTAAYRTGIRPDEEVISKKFIGMLEDFALNDKGTLTFGECNFQNNVNSKEYQVLRISRNACKNEEYARFP.

A signal peptide spans 1–19; sequence MSIFKRLLCLTLLWIAALE. A glycan (N-linked (GlcNAc...) asparagine) is linked at N75. C83 and C102 are disulfide-bonded. The N-linked (GlcNAc...) asparagine glycan is linked to N114. The active-site Acyl-ester intermediate is the S206. A disulfide bridge links C258 with C270. 2 N-linked (GlcNAc...) asparagine glycosylation sites follow: N262 and N456. The Charge relay system role is filled by H466. C514 and C535 are joined by a disulfide.

This sequence belongs to the type-B carboxylesterase/lipase family. In terms of assembly, monomer.

The protein resides in the secreted. The enzyme catalyses a carboxylic ester + H2O = an alcohol + a carboxylate + H(+). This chain is Esterase P (Est-P), found in Drosophila melanogaster (Fruit fly).